A 725-amino-acid chain; its full sequence is Manganese-exporting P-type ATPase (725 aa).

The 68-residue stretch at 25 to 92 (GRMRIQIEWV…AISGAAHVAA (68 aa)) folds into the HMA domain. 6 helical membrane passes run 101 to 119 (HSSD…GAAA), 142 to 160 (LVAS…RGAL), 165 to 179 (TGTD…IASL), 188 to 202 (LAVL…YLQD), 335 to 359 (VGEN…AITK), and 365 to 383 (MTVL…TPTA). Catalysis depends on Asp416, which acts as the 4-aspartylphosphate intermediate. Mg(2+) contacts are provided by Asp416, Thr418, and Asp618. 2 consecutive transmembrane segments (helical) span residues 669 to 688 (AVEV…AAGL) and 698 to 717 (PVLA…ANSS).

This sequence belongs to the cation transport ATPase (P-type) (TC 3.A.3) family. Type IB subfamily.

It localises to the cell membrane. It carries out the reaction Mn(2+)(in) + ATP + H2O = Mn(2+)(out) + ADP + phosphate + H(+). Its function is as follows. High affinity, slow turnover Mn(2+) transporting ATPase. The protein is Manganese-exporting P-type ATPase (ctpC) of Mycobacterium leprae (strain TN).